Reading from the N-terminus, the 172-residue chain is 6,7-dimethyl-8-ribityllumazine synthase (172 aa).

Residues Phe24, 58 to 60 (ALE), and 82 to 84 (AVI) contribute to the 5-amino-6-(D-ribitylamino)uracil site. 87–88 (ET) lines the (2S)-2-hydroxy-3-oxobutyl phosphate pocket. Residue His90 is the Proton donor of the active site. A 5-amino-6-(D-ribitylamino)uracil-binding site is contributed by Asn115. Arg129 is a binding site for (2S)-2-hydroxy-3-oxobutyl phosphate. The tract at residues 150-172 (ALDQLGDDDEDEEEDEDDEEERA) is disordered. Acidic residues predominate over residues 154–172 (LGDDDEDEEEDEDDEEERA).

The protein belongs to the DMRL synthase family.

It carries out the reaction (2S)-2-hydroxy-3-oxobutyl phosphate + 5-amino-6-(D-ribitylamino)uracil = 6,7-dimethyl-8-(1-D-ribityl)lumazine + phosphate + 2 H2O + H(+). Its pathway is cofactor biosynthesis; riboflavin biosynthesis; riboflavin from 2-hydroxy-3-oxobutyl phosphate and 5-amino-6-(D-ribitylamino)uracil: step 1/2. In terms of biological role, catalyzes the formation of 6,7-dimethyl-8-ribityllumazine by condensation of 5-amino-6-(D-ribitylamino)uracil with 3,4-dihydroxy-2-butanone 4-phosphate. This is the penultimate step in the biosynthesis of riboflavin. In Burkholderia multivorans (strain ATCC 17616 / 249), this protein is 6,7-dimethyl-8-ribityllumazine synthase.